Reading from the N-terminus, the 417-residue chain is NADH-quinone oxidoreductase subunit D (417 aa).

Belongs to the complex I 49 kDa subunit family. NDH-1 is composed of 14 different subunits. Subunits NuoB, C, D, E, F, and G constitute the peripheral sector of the complex.

Its subcellular location is the cell inner membrane. The catalysed reaction is a quinone + NADH + 5 H(+)(in) = a quinol + NAD(+) + 4 H(+)(out). Its function is as follows. NDH-1 shuttles electrons from NADH, via FMN and iron-sulfur (Fe-S) centers, to quinones in the respiratory chain. The immediate electron acceptor for the enzyme in this species is believed to be ubiquinone. Couples the redox reaction to proton translocation (for every two electrons transferred, four hydrogen ions are translocated across the cytoplasmic membrane), and thus conserves the redox energy in a proton gradient. This Cupriavidus necator (strain ATCC 17699 / DSM 428 / KCTC 22496 / NCIMB 10442 / H16 / Stanier 337) (Ralstonia eutropha) protein is NADH-quinone oxidoreductase subunit D.